A 309-amino-acid chain; its full sequence is Protein FdhE (309 aa).

It belongs to the FdhE family.

The protein resides in the cytoplasm. Its function is as follows. Necessary for formate dehydrogenase activity. The protein is Protein FdhE of Escherichia coli (strain SMS-3-5 / SECEC).